The primary structure comprises 310 residues: D-erythrulose 1-phosphate 3-epimerase (310 aa).

It carries out the reaction D-erythrulose 1-phosphate = L-erythrulose 1-phosphate. It functions in the pathway carbohydrate metabolism; erythritol degradation. Its function is as follows. Catalyzes the racemization of D-erythrulose 1-phosphate to L-erythrulose 1-phosphate. The sequence is that of D-erythrulose 1-phosphate 3-epimerase from Brucella abortus (strain 2308).